A 300-amino-acid chain; its full sequence is Tyrosine recombinase XerC (300 aa).

In terms of domain architecture, Core-binding (CB) spans 1–86 (MESVLDAFDQ…AVKTFTAWAV (86 aa)). In terms of domain architecture, Tyr recombinase spans 107–294 (TLPAVLRQDQ…TVARLRAVHD (188 aa)). Residues Arg151, Lys175, His246, Arg249, and His272 contribute to the active site. Tyr281 serves as the catalytic O-(3'-phospho-DNA)-tyrosine intermediate.

The protein belongs to the 'phage' integrase family. XerC subfamily. In terms of assembly, forms a cyclic heterotetrameric complex composed of two molecules of XerC and two molecules of XerD.

The protein resides in the cytoplasm. Site-specific tyrosine recombinase, which acts by catalyzing the cutting and rejoining of the recombining DNA molecules. The XerC-XerD complex is essential to convert dimers of the bacterial chromosome into monomers to permit their segregation at cell division. It also contributes to the segregational stability of plasmids. The chain is Tyrosine recombinase XerC from Mycobacterium sp. (strain KMS).